Consider the following 167-residue polypeptide: MSVTLHTTLGDLKIEIFCESVPKTAENFLALCASGYYNASPFHRMIPSFMVQTGAPANPSPPENPKGGRSIYGPTFEDEIRPVLRHNERGIVSMANKGPNTNGSQFFILFDKAPHLDGLNTVFGKLIGDESLQTLAKLEGLEVDKKNRIKEEVRIERVTVHANPLAK.

Positions Met-1–Val-160 constitute a PPIase cyclophilin-type domain.

The protein belongs to the cyclophilin-type PPIase family. PPIL3 subfamily.

It catalyses the reaction [protein]-peptidylproline (omega=180) = [protein]-peptidylproline (omega=0). Its function is as follows. PPIases accelerate the folding of proteins. It catalyzes the cis-trans isomerization of proline imidic peptide bonds in oligopeptides. This chain is Peptidyl-prolyl cis-trans isomerase-like 3 (cyp-10), found in Neurospora crassa (strain ATCC 24698 / 74-OR23-1A / CBS 708.71 / DSM 1257 / FGSC 987).